A 337-amino-acid chain; its full sequence is Cobalt-precorrin-5B C(1)-methyltransferase (337 aa).

It belongs to the CbiD family.

It catalyses the reaction Co-precorrin-5B + S-adenosyl-L-methionine = Co-precorrin-6A + S-adenosyl-L-homocysteine. It participates in cofactor biosynthesis; adenosylcobalamin biosynthesis; cob(II)yrinate a,c-diamide from sirohydrochlorin (anaerobic route): step 6/10. Functionally, catalyzes the methylation of C-1 in cobalt-precorrin-5B to form cobalt-precorrin-6A. This is Cobalt-precorrin-5B C(1)-methyltransferase from Methanoculleus marisnigri (strain ATCC 35101 / DSM 1498 / JR1).